We begin with the raw amino-acid sequence, 465 residues long: 2-methylcitrate synthase, mitochondrial (465 aa).

2 residues coordinate CoA: R72 and K190. H265 is an oxaloacetate binding site. L300 provides a ligand contact to CoA. The active site involves H301. The CoA site is built by V342, G344, and Y345. Oxaloacetate contacts are provided by H347 and R356. H347 is a catalytic residue. 3 residues coordinate CoA: T394, K395, and N400. D402 is a catalytic residue. 2 residues coordinate oxaloacetate: R428 and R448.

Belongs to the citrate synthase family. In terms of assembly, homodimer.

It localises to the mitochondrion matrix. It carries out the reaction propanoyl-CoA + oxaloacetate + H2O = (2S,3S)-2-methylcitrate + CoA + H(+). The enzyme catalyses oxaloacetate + acetyl-CoA + H2O = citrate + CoA + H(+). The protein operates within organic acid metabolism; propanoate degradation. Activity is inhibited by p-chloromercuribenzoate (pCMB), monoiodoacetamide, H(2)O(2), ATP, ADP, NADH, NADPH, Hg(2+) and Zn(2+). Component of the methylcitrate cycle that catalyzes the synthesis of (2S,3S)-2-methylcitrate from propionyl-CoA and oxaloacetate. Plays an important role in detoxification of propionyl-CoA, an inhibitor of both primary and secondary metabolism. Also has citrate synthase activity using as substrates acetyl-CoA and oxaloacetate. This chain is 2-methylcitrate synthase, mitochondrial, found in Yarrowia lipolytica (strain CLIB 122 / E 150) (Yeast).